The chain runs to 368 residues: Protein pxr1 (368 aa).

Disordered regions lie at residues 1 to 28 and 161 to 339; these read MGLA…TDSF and KEKA…PMGI. Over residues 15 to 27 the composition is skewed to polar residues; that stretch reads DPNNTRWSGNTDS. The 55-residue stretch at 25–79 folds into the G-patch domain; sequence TDSFGHRMMKSQGWTPGEYLGAKDAAHAEFHTEANASHIRVVIKDNTLGLGAKIG. The segment covering 168–182 has biased composition (acidic residues); the sequence is SSEESDSSSDEEEEK. Basic residues-rich tracts occupy residues 209–226, 242–254, 271–283, and 301–312; these read SKKS…KSKK, KSKK…KSKS, KARK…KKRK, and SSKKSKKDKHKS. The span at 313 to 324 shows a compositional bias: low complexity; it reads PSTSKTSTKEST. The segment covering 325 to 334 has biased composition (polar residues); that stretch reads PIVSESSGRS.

This sequence belongs to the PINX1 family.

It localises to the nucleus. It is found in the nucleolus. Involved in rRNA-processing at A0, A1 and A2 sites and negatively regulates telomerase. The protein is Protein pxr1 (pxr1) of Botryotinia fuckeliana (strain B05.10) (Noble rot fungus).